The following is a 215-amino-acid chain: MSGVLGIRDLGLQPYEPVLEAMRRFTEQRGPESQDEVWLVEHPPVFTQGQAGKAEHLLIPGEIPVVQTDRGGQVTYHGPGQLVAYLLLDVRRLSIGVRELVSRIEQTLIDLLASYGVQAVAKPDAPGVYVDGAKIASLGLRIRNGRSFHGLALNVDMDLAPFRRINPCGYAGLAMTQLRDLAGPIELDEVRTRLRGQLVRHLDYAEQTTLTGGID.

Residues 31-206 (PESQDEVWLV…QLVRHLDYAE (176 aa)) form the BPL/LPL catalytic domain. Residues 70-77 (RGGQVTYH), 137-139 (SLG), and 150-152 (GLA) contribute to the substrate site. Cys168 functions as the Acyl-thioester intermediate in the catalytic mechanism.

It belongs to the LipB family.

The protein resides in the cytoplasm. It carries out the reaction octanoyl-[ACP] + L-lysyl-[protein] = N(6)-octanoyl-L-lysyl-[protein] + holo-[ACP] + H(+). It functions in the pathway protein modification; protein lipoylation via endogenous pathway; protein N(6)-(lipoyl)lysine from octanoyl-[acyl-carrier-protein]: step 1/2. Its function is as follows. Catalyzes the transfer of endogenously produced octanoic acid from octanoyl-acyl-carrier-protein onto the lipoyl domains of lipoate-dependent enzymes. Lipoyl-ACP can also act as a substrate although octanoyl-ACP is likely to be the physiological substrate. This is Octanoyltransferase from Pseudomonas entomophila (strain L48).